The sequence spans 197 residues: Protein GrpE (197 aa).

Positions 1–39 (MSSKEQKTPEGQAPEEIIMDQHEEIEAVEPEASAEQVDP) are disordered.

The protein belongs to the GrpE family. As to quaternary structure, homodimer.

The protein localises to the cytoplasm. In terms of biological role, participates actively in the response to hyperosmotic and heat shock by preventing the aggregation of stress-denatured proteins, in association with DnaK and GrpE. It is the nucleotide exchange factor for DnaK and may function as a thermosensor. Unfolded proteins bind initially to DnaJ; upon interaction with the DnaJ-bound protein, DnaK hydrolyzes its bound ATP, resulting in the formation of a stable complex. GrpE releases ADP from DnaK; ATP binding to DnaK triggers the release of the substrate protein, thus completing the reaction cycle. Several rounds of ATP-dependent interactions between DnaJ, DnaK and GrpE are required for fully efficient folding. The protein is Protein GrpE of Escherichia coli O127:H6 (strain E2348/69 / EPEC).